The chain runs to 456 residues: Chaperone protein dnaJ GFA2, mitochondrial (456 aa).

The transit peptide at 1–89 directs the protein to the mitochondrion; the sequence is MVPSNGAKVL…RSFHGTGSSF (89 aa). The J domain occupies 94–159; it reads DYYSVLGVSK…EKRDLYDQVG (66 aa). A CR-type zinc finger spans residues 225-303; it reads GCSKTVTFQT…CRGARVVRGQ (79 aa). Cys-238, Cys-241, Cys-255, Cys-258, Cys-277, Cys-280, Cys-291, and Cys-294 together coordinate Zn(2+). CXXCXGXG motif repeat units lie at residues 238–245, 255–262, 277–284, and 291–298; these read CNTCGGQG, CKACNGSG, CQKCGGAG, and CKSCRGAR.

Belongs to the DnaJ family. Widely expressed.

It localises to the mitochondrion. Functionally, chaperone that may play a role in mitochondrial protein folding. Involved in female gametophyte development. Required for cell death of the synergid cells during fertilization process, and fusion of the polar nuclei during megagametogenesis. In Arabidopsis thaliana (Mouse-ear cress), this protein is Chaperone protein dnaJ GFA2, mitochondrial.